The following is a 514-amino-acid chain: Nitric oxide reductase transcription regulator NorR1 (514 aa).

4-aspartylphosphate is present on aspartate 54. Residues 187–416 (IIGQSQAIAG…LEHVISRAAL (230 aa)) form the Sigma-54 factor interaction domain. Residues 215–222 (GETGVGKE) and 287–296 (EVGELPLSIQ) each bind ATP. Positions 490 to 509 (WAKAARQLGMDASNLHKLAK) form a DNA-binding region, H-T-H motif.

The protein operates within nitrogen metabolism; nitrate reduction (denitrification) [regulation]. Functionally, required for the nitric oxide (NO) induced expression of NO reductase. Not required for expression of 2 other pathway members, nitrate reductase (nirS) and nitrous oxide reductase (nosZ). This Cupriavidus necator (strain ATCC 17699 / DSM 428 / KCTC 22496 / NCIMB 10442 / H16 / Stanier 337) (Ralstonia eutropha) protein is Nitric oxide reductase transcription regulator NorR1 (norR1).